We begin with the raw amino-acid sequence, 515 residues long: MCQVGEDYGEPAPEEPPPAPRPSREQKCVKCKEAQPVVVIRAGDAFCRDCFKAFYVHKFRAMLGKNRLIFPGEKVLLAWSGGPSSSSMVWQVLEGLSQDSAKRLRFVAGVIFVDEGAACGQSLEERSKTLAEVKPILQATGFPWHVVALEEVFSLPPSVLWCSAQELVGSEGAYKAAVDSFLQQQHVLGAGGGPGPTQGEEQPPQPPLDPQNLARPPAPAQTEALSQLFCSVRTLTAKEELLQTLRTHLILHMARAHGYSKVMTGDSCTRLAIKLMTNLALGRGAFLAWDTGFSDERHGDVVVVRPMRDHTLKEVAFYNRLFSVPSVFTPAVDTKAPEKASIHRLMEAFILRLQTQFPSTVSTVYRTSEKLVKGPRDGPAAGDSGPRCLLCMCALDVDAADSATAFGAQTSSRLSQMQSPIPLTETRTPPGPCCSPGVGWAQRCGQGACRREDPQACIEEQLCYSCRVNMKDLPSLDPLPPYILAEAQLRTQRAWGLQEIRDCLIEDSDDEAGQS.

Disordered regions lie at residues Met-1–Arg-24 and Leu-188–Pro-217. The residue at position 2 (Cys-2) is an N-acetylcysteine. A phosphoserine mark is found at Ser-415, Ser-419, Ser-435, and Ser-508.

It belongs to the CTU2/NCS2 family. As to quaternary structure, component of a complex at least composed of URM1, CTU2/NCS2 and CTU1/ATPBD3.

The protein localises to the cytoplasm. Its pathway is tRNA modification; 5-methoxycarbonylmethyl-2-thiouridine-tRNA biosynthesis. Its function is as follows. Plays a central role in 2-thiolation of mcm(5)S(2)U at tRNA wobble positions of tRNA(Lys), tRNA(Glu) and tRNA(Gln). May act by forming a heterodimer with CTU1/ATPBD3 that ligates sulfur from thiocarboxylated URM1 onto the uridine of tRNAs at wobble position. In Homo sapiens (Human), this protein is Cytoplasmic tRNA 2-thiolation protein 2.